The chain runs to 544 residues: Hydroxylamine reductase (544 aa).

Residues Cys3, Cys6, Cys15, and Cys21 each contribute to the [4Fe-4S] cluster site. His244, Glu268, Cys313, Cys400, Cys428, Cys453, Glu487, and Lys489 together coordinate hybrid [4Fe-2O-2S] cluster. Cys400 carries the post-translational modification Cysteine persulfide.

The protein belongs to the HCP family. Requires [4Fe-4S] cluster as cofactor. It depends on hybrid [4Fe-2O-2S] cluster as a cofactor.

The protein localises to the cytoplasm. The enzyme catalyses A + NH4(+) + H2O = hydroxylamine + AH2 + H(+). In terms of biological role, catalyzes the reduction of hydroxylamine to form NH(3) and H(2)O. The sequence is that of Hydroxylamine reductase from Trichormus variabilis (strain ATCC 29413 / PCC 7937) (Anabaena variabilis).